Consider the following 430-residue polypeptide: Purine nucleoside phosphorylase LACC1 (430 aa).

The residue at position 247 (lysine 247) is an N6-acetyllysine. The Zn(2+) site is built by histidine 250, cysteine 284, and histidine 301.

Belongs to the purine nucleoside phosphorylase YfiH/LACC1 family. As to quaternary structure, interacts with FASN. Interacts with SDHA. Interacts with ATF6, EIF2AK3 and ERN1. Post-translationally, phosphorylated on tyrosine residues. As to expression, predominantly expressed in myeloid cells. Highly expressed in primary macrophages and dendritic cells sorted from the peritoneum or spleen, respectively (at protein level).

It is found in the cytoplasm. The protein localises to the nucleus. The protein resides in the endoplasmic reticulum. Its subcellular location is the peroxisome. It catalyses the reaction adenosine + phosphate = alpha-D-ribose 1-phosphate + adenine. It carries out the reaction inosine + phosphate = alpha-D-ribose 1-phosphate + hypoxanthine. The enzyme catalyses guanosine + phosphate = alpha-D-ribose 1-phosphate + guanine. The catalysed reaction is S-methyl-5'-thioadenosine + phosphate = 5-(methylsulfanyl)-alpha-D-ribose 1-phosphate + adenine. It catalyses the reaction adenosine + H2O + H(+) = inosine + NH4(+). Its function is as follows. Purine nucleoside enzyme that catalyzes the phosphorolysis of adenosine, guanosine and inosine nucleosides, yielding D-ribose 1-phosphate and the respective free bases, adenine, guanine and hypoxanthine. Also catalyzes the phosphorolysis of S-methyl-5'-thioadenosine into adenine and S-methyl-5-thio-alpha-D-ribose 1-phosphate. Also has adenosine deaminase activity. Acts as a regulator of innate immunity in macrophages by modulating the purine nucleotide metabolism, thereby regulating the metabolic function and bioenergetic state of macrophages. Enables a purine nucleotide cycle between adenosine and inosine monophosphate and adenylosuccinate that prevents cytoplasmic acidification and balances the cytoplasmic-mitochondrial redox interface. The purine nucleotide cycle consumes aspartate and releases fumarate in a manner involving fatty acid oxidation and ATP-citrate lyase activity. Participates in pattern recognition receptor-induced cytokines in macrophages: associates with the NOD2-signaling complex and promotes optimal NOD2-induced signaling, cytokine secretion and bacterial clearance. Localizes to the endoplasmic reticulum upon PRR stimulation of macrophages and associates with endoplasmic reticulum-stress sensors, promoting the endoplasmic reticulum unfolded protein response (UPR). Does not show laccase activity. The polypeptide is Purine nucleoside phosphorylase LACC1 (Mus musculus (Mouse)).